A 185-amino-acid chain; its full sequence is Ribosome-recycling factor (185 aa).

The protein belongs to the RRF family.

It is found in the cytoplasm. Responsible for the release of ribosomes from messenger RNA at the termination of protein biosynthesis. May increase the efficiency of translation by recycling ribosomes from one round of translation to another. This chain is Ribosome-recycling factor, found in Streptococcus pyogenes serotype M1.